We begin with the raw amino-acid sequence, 375 residues long: N-acetyldiaminopimelate deacetylase (375 aa).

Asp-69 is a catalytic residue. Glu-128 functions as the Proton acceptor in the catalytic mechanism.

This sequence belongs to the peptidase M20A family. N-acetyldiaminopimelate deacetylase subfamily.

It catalyses the reaction N-acetyl-(2S,6S)-2,6-diaminopimelate + H2O = (2S,6S)-2,6-diaminopimelate + acetate. The protein operates within amino-acid biosynthesis; L-lysine biosynthesis via DAP pathway; LL-2,6-diaminopimelate from (S)-tetrahydrodipicolinate (acetylase route): step 3/3. Catalyzes the conversion of N-acetyl-diaminopimelate to diaminopimelate and acetate. This is N-acetyldiaminopimelate deacetylase from Streptococcus suis (strain 05ZYH33).